The primary structure comprises 613 residues: Xaa-Pro aminopeptidase ApepP (613 aa).

Substrate-binding residues include Arg-77 and His-388. Asp-408, Asp-419, and His-482 together coordinate Mn(2+). Positions 482, 491, and 517 each coordinate substrate. Positions 517 and 531 each coordinate Mn(2+).

Belongs to the peptidase M24B family. The cofactor is Mn(2+). Detected in gut, brain, testes and ovary.

The protein localises to the cytoplasm. It catalyses the reaction Release of any N-terminal amino acid, including proline, that is linked to proline, even from a dipeptide or tripeptide.. Its activity is regulated as follows. Inhibited by the chelating agent EDTA. Divalent metal ions have substrate- and concentration-dependent effects on activity. Activity towards bradykinin is inhibited with increasing Mn(2+) concentration. Activity towards substance P is stimulated by low Mn(2+) concentrations (in the range 10 uM-1 mM) but inhibited by Mn(2+) concentrations in excess of 1 mM. Ca(2+), Mg(2+) and Co(2+) stimulate activity towards substance P at concentrations of 10-100 uM but are inhibitory at concentrations of 1 mM. Zn(2+), Ni(2+) and Cu(2+) strongly inhibit activity towards substance P at concentrations of 1 mM. Functionally, catalyzes the removal of a penultimate prolyl residue from the N-termini of peptides, such as Arg-Pro-Pro. This is Xaa-Pro aminopeptidase ApepP from Drosophila melanogaster (Fruit fly).